Consider the following 243-residue polypeptide: tRNA pseudouridine synthase A (243 aa).

Catalysis depends on D51, which acts as the Nucleophile. Y111 lines the substrate pocket.

The protein belongs to the tRNA pseudouridine synthase TruA family. In terms of assembly, homodimer.

It carries out the reaction uridine(38/39/40) in tRNA = pseudouridine(38/39/40) in tRNA. Formation of pseudouridine at positions 38, 39 and 40 in the anticodon stem and loop of transfer RNAs. The chain is tRNA pseudouridine synthase A from Neorickettsia sennetsu (strain ATCC VR-367 / Miyayama) (Ehrlichia sennetsu).